Reading from the N-terminus, the 507-residue chain is Bifunctional purine biosynthesis protein PurH (507 aa).

The region spanning methionine 1 to valine 144 is the MGS-like domain.

This sequence belongs to the PurH family.

The catalysed reaction is (6R)-10-formyltetrahydrofolate + 5-amino-1-(5-phospho-beta-D-ribosyl)imidazole-4-carboxamide = 5-formamido-1-(5-phospho-D-ribosyl)imidazole-4-carboxamide + (6S)-5,6,7,8-tetrahydrofolate. It catalyses the reaction IMP + H2O = 5-formamido-1-(5-phospho-D-ribosyl)imidazole-4-carboxamide. The protein operates within purine metabolism; IMP biosynthesis via de novo pathway; 5-formamido-1-(5-phospho-D-ribosyl)imidazole-4-carboxamide from 5-amino-1-(5-phospho-D-ribosyl)imidazole-4-carboxamide (10-formyl THF route): step 1/1. It participates in purine metabolism; IMP biosynthesis via de novo pathway; IMP from 5-formamido-1-(5-phospho-D-ribosyl)imidazole-4-carboxamide: step 1/1. In Lacticaseibacillus casei (strain BL23) (Lactobacillus casei), this protein is Bifunctional purine biosynthesis protein PurH.